The chain runs to 251 residues: Triosephosphate isomerase (251 aa).

Residue 9 to 11 (NWK) participates in substrate binding. Histidine 95 (electrophile) is an active-site residue. The Proton acceptor role is filled by glutamate 167. Substrate contacts are provided by residues glycine 173, serine 213, and 234–235 (GG). The residue at position 213 (serine 213) is a Phosphoserine.

Belongs to the triosephosphate isomerase family. Homodimer.

It is found in the cytoplasm. It catalyses the reaction D-glyceraldehyde 3-phosphate = dihydroxyacetone phosphate. The protein operates within carbohydrate biosynthesis; gluconeogenesis. It functions in the pathway carbohydrate degradation; glycolysis; D-glyceraldehyde 3-phosphate from glycerone phosphate: step 1/1. Involved in the gluconeogenesis. Catalyzes stereospecifically the conversion of dihydroxyacetone phosphate (DHAP) to D-glyceraldehyde-3-phosphate (G3P). The sequence is that of Triosephosphate isomerase from Bacillus cereus (strain G9842).